Reading from the N-terminus, the 375-residue chain is Tyrosine--tRNA ligase (375 aa).

L-tyrosine-binding residues include Y37, Y168, Q172, D175, and Q190. A 'KMSKS' region motif is present at residues 251-255 (KMSKS). K254 is an ATP binding site.

The protein belongs to the class-I aminoacyl-tRNA synthetase family. TyrS type 4 subfamily. As to quaternary structure, homodimer.

It is found in the cytoplasm. The catalysed reaction is tRNA(Tyr) + L-tyrosine + ATP = L-tyrosyl-tRNA(Tyr) + AMP + diphosphate + H(+). In terms of biological role, catalyzes the attachment of tyrosine to tRNA(Tyr) in a two-step reaction: tyrosine is first activated by ATP to form Tyr-AMP and then transferred to the acceptor end of tRNA(Tyr). The sequence is that of Tyrosine--tRNA ligase from Pyrococcus horikoshii (strain ATCC 700860 / DSM 12428 / JCM 9974 / NBRC 100139 / OT-3).